A 327-amino-acid chain; its full sequence is Phenylalanine--tRNA ligase alpha subunit (327 aa).

Mg(2+) is bound at residue glutamate 252.

It belongs to the class-II aminoacyl-tRNA synthetase family. Phe-tRNA synthetase alpha subunit type 1 subfamily. Tetramer of two alpha and two beta subunits. It depends on Mg(2+) as a cofactor.

It is found in the cytoplasm. It catalyses the reaction tRNA(Phe) + L-phenylalanine + ATP = L-phenylalanyl-tRNA(Phe) + AMP + diphosphate + H(+). This chain is Phenylalanine--tRNA ligase alpha subunit, found in Pectobacterium atrosepticum (strain SCRI 1043 / ATCC BAA-672) (Erwinia carotovora subsp. atroseptica).